The primary structure comprises 208 residues: Small ribosomal subunit protein uS2 (208 aa).

It belongs to the universal ribosomal protein uS2 family.

The protein is Small ribosomal subunit protein uS2 of Pyrobaculum calidifontis (strain DSM 21063 / JCM 11548 / VA1).